We begin with the raw amino-acid sequence, 418 residues long: N-acetylglucosamine-6-phosphate deacetylase (418 aa).

Position 154 (Glu154) interacts with a divalent metal cation. Position 165–166 (165–166 (CH)) interacts with substrate. Residues His223 and His244 each coordinate a divalent metal cation. Residues 247–248 (NA), Arg255, and 281–284 (DGIH) contribute to the substrate site. Residue Asp306 is the Proton donor/acceptor of the active site. Residue 340–342 (TAG) participates in substrate binding.

This sequence belongs to the metallo-dependent hydrolases superfamily. NagA family. Requires a divalent metal cation as cofactor.

It catalyses the reaction N-acetyl-D-glucosamine 6-phosphate + H2O = D-glucosamine 6-phosphate + acetate. This is N-acetylglucosamine-6-phosphate deacetylase from Caenorhabditis elegans.